The following is a 258-amino-acid chain: Pimeloyl-[acyl-carrier protein] methyl ester esterase (258 aa).

The AB hydrolase-1 domain maps to V17–H241. Substrate-binding positions include W23, S83–L84, and F145–Q149. Catalysis depends on S83, which acts as the Nucleophile. Residues D207 and H235 contribute to the active site. H235 is a binding site for substrate.

This sequence belongs to the AB hydrolase superfamily. Carboxylesterase BioH family. As to quaternary structure, monomer.

The protein localises to the cytoplasm. It carries out the reaction 6-carboxyhexanoyl-[ACP] methyl ester + H2O = 6-carboxyhexanoyl-[ACP] + methanol + H(+). It functions in the pathway cofactor biosynthesis; biotin biosynthesis. In terms of biological role, the physiological role of BioH is to remove the methyl group introduced by BioC when the pimeloyl moiety is complete. It allows to synthesize pimeloyl-ACP via the fatty acid synthetic pathway through the hydrolysis of the ester bonds of pimeloyl-ACP esters. The polypeptide is Pimeloyl-[acyl-carrier protein] methyl ester esterase (Neisseria meningitidis serogroup B (strain ATCC BAA-335 / MC58)).